We begin with the raw amino-acid sequence, 67 residues long: Beta-defensin 36 (67 aa).

A signal peptide spans 1 to 22 (MKLLLLTLAALLLVSQLTPGDA). Disulfide bonds link Cys-25–Cys-52, Cys-32–Cys-46, and Cys-36–Cys-53.

The protein belongs to the beta-defensin family.

The protein resides in the secreted. Has antibacterial activity. This Mus musculus (Mouse) protein is Beta-defensin 36 (Defb36).